We begin with the raw amino-acid sequence, 426 residues long: Serine--tRNA ligase (426 aa).

An L-serine-binding site is contributed by 231-233 (TAE). 262–264 (RSE) contributes to the ATP binding site. Glu285 provides a ligand contact to L-serine. 349-352 (EISS) lines the ATP pocket. Ser385 serves as a coordination point for L-serine.

This sequence belongs to the class-II aminoacyl-tRNA synthetase family. Type-1 seryl-tRNA synthetase subfamily. In terms of assembly, homodimer. The tRNA molecule binds across the dimer.

It is found in the cytoplasm. It carries out the reaction tRNA(Ser) + L-serine + ATP = L-seryl-tRNA(Ser) + AMP + diphosphate + H(+). It catalyses the reaction tRNA(Sec) + L-serine + ATP = L-seryl-tRNA(Sec) + AMP + diphosphate + H(+). The protein operates within aminoacyl-tRNA biosynthesis; selenocysteinyl-tRNA(Sec) biosynthesis; L-seryl-tRNA(Sec) from L-serine and tRNA(Sec): step 1/1. Catalyzes the attachment of serine to tRNA(Ser). Is also able to aminoacylate tRNA(Sec) with serine, to form the misacylated tRNA L-seryl-tRNA(Sec), which will be further converted into selenocysteinyl-tRNA(Sec). In Saccharophagus degradans (strain 2-40 / ATCC 43961 / DSM 17024), this protein is Serine--tRNA ligase.